A 226-amino-acid chain; its full sequence is Ornithine decarboxylase antizyme (226 aa).

It belongs to the ODC antizyme family. As to quaternary structure, interacts with ODC and thereby sterically blocks ODC homodimerization.

Functionally, ornithine decarboxylase (ODC) antizyme protein that negatively regulates ODC activity and intracellular polyamine biosynthesis in response to increased intracellular polyamine levels. Binds to ODC monomers, inhibiting the assembly of the functional ODC homodimer, and targets the monomers for ubiquitin-independent proteolytic destruction by the 26S proteasome. This Schizosaccharomyces pombe (strain 972 / ATCC 24843) (Fission yeast) protein is Ornithine decarboxylase antizyme (spa1).